The primary structure comprises 626 residues: Serine/threonine-protein kinase PknH (626 aa).

Over 1-403 (MSDAQDSRVG…QTPRKTNPWP (403 aa)) the chain is Cytoplasmic. Positions 16–276 (YHLKRLLGRG…DLALAAHEAL (261 aa)) constitute a Protein kinase domain. ATP is bound by residues 22–30 (LGRGGMGEV) and Lys45. The active-site Proton acceptor is the Asp139. A Phosphothreonine modification is found at Thr170. The segment at 292 to 396 (QESTLPAPPK…GGPSPWAQTP (105 aa)) is disordered. Pro residues-rich tracts occupy residues 297–308 (PAPPKPVPPPTM) and 316–342 (RQPP…PAQP). Positions 343 to 355 (GPAGQRPGPTGQP) are enriched in low complexity. The helical transmembrane segment at 404–424 (LVAGAAAVVLVLVLGAIGIWI) threads the bilayer. The Extracellular portion of the chain corresponds to 425–626 (AIRPKPVQPP…AKIVDKVNKE (202 aa)). 2 disulfides stabilise this stretch: Cys482-Cys545 and Cys587-Cys604.

This sequence belongs to the protein kinase superfamily. Ser/Thr protein kinase family. A divalent metal cation is required as a cofactor. In terms of processing, autophosphorylated on threonine and serine residues. Dephosphorylated by PstP.

It is found in the cell membrane. It catalyses the reaction L-seryl-[protein] + ATP = O-phospho-L-seryl-[protein] + ADP + H(+). The enzyme catalyses L-threonyl-[protein] + ATP = O-phospho-L-threonyl-[protein] + ADP + H(+). In terms of biological role, may regulate bacterial growth in response to external signals to facilitate adaptation to the host environment. In Mycobacterium tuberculosis (strain CDC 1551 / Oshkosh), this protein is Serine/threonine-protein kinase PknH (pknH).